The chain runs to 363 residues: Galactokinase (363 aa).

16 to 19 (EHTD) contacts substrate. ATP contacts are provided by residues Ser-50 and 103 to 109 (GSGLSSS). Mg(2+)-binding residues include Ser-109 and Glu-141. Catalysis depends on Asp-153, which acts as the Proton acceptor. Residue Tyr-205 participates in substrate binding.

The protein belongs to the GHMP kinase family. GalK subfamily.

It is found in the cytoplasm. It carries out the reaction alpha-D-galactose + ATP = alpha-D-galactose 1-phosphate + ADP + H(+). It participates in carbohydrate metabolism; galactose metabolism. Its function is as follows. Catalyzes the transfer of the gamma-phosphate of ATP to D-galactose to form alpha-D-galactose-1-phosphate (Gal-1-P). This Mycobacterium bovis (strain ATCC BAA-935 / AF2122/97) protein is Galactokinase.